The primary structure comprises 629 residues: tRNA uridine 5-carboxymethylaminomethyl modification enzyme MnmG (629 aa).

Residues 13 to 18, Val-125, and Ser-180 each bind FAD; that span reads GGGHAG. Residue 273–287 coordinates NAD(+); the sequence is GPRYCPSIEDKVMRF. Residue Gln-370 participates in FAD binding.

Belongs to the MnmG family. In terms of assembly, homodimer. Heterotetramer of two MnmE and two MnmG subunits. The cofactor is FAD.

It localises to the cytoplasm. NAD-binding protein involved in the addition of a carboxymethylaminomethyl (cmnm) group at the wobble position (U34) of certain tRNAs, forming tRNA-cmnm(5)s(2)U34. In Cronobacter sakazakii (strain ATCC BAA-894) (Enterobacter sakazakii), this protein is tRNA uridine 5-carboxymethylaminomethyl modification enzyme MnmG.